The following is a 334-amino-acid chain: DNA-directed RNA polymerase subunit alpha (334 aa).

The alpha N-terminal domain (alpha-NTD) stretch occupies residues Met-1–Glu-233. Residues Asp-263–Leu-334 form an alpha C-terminal domain (alpha-CTD) region.

Belongs to the RNA polymerase alpha chain family. In terms of assembly, in plastids the minimal PEP RNA polymerase catalytic core is composed of four subunits: alpha, beta, beta', and beta''. When a (nuclear-encoded) sigma factor is associated with the core the holoenzyme is formed, which can initiate transcription.

The protein localises to the plastid. The protein resides in the chloroplast. The enzyme catalyses RNA(n) + a ribonucleoside 5'-triphosphate = RNA(n+1) + diphosphate. Its function is as follows. DNA-dependent RNA polymerase catalyzes the transcription of DNA into RNA using the four ribonucleoside triphosphates as substrates. This is DNA-directed RNA polymerase subunit alpha from Chaetosphaeridium globosum (Charophycean green alga).